We begin with the raw amino-acid sequence, 204 residues long: Refilin-A (204 aa).

The interval 1 to 52 (MVGHLHLQAMGDTREQSRDGLLDSPDSGLPPSPSPSPPFYALSPGTLDTRTT) is disordered. Residues 12-21 (DTREQSRDGL) are compositionally biased toward basic and acidic residues. The segment covering 28–38 (GLPPSPSPSPP) has biased composition (pro residues). Residue arginine 151 is modified to Asymmetric dimethylarginine.

This sequence belongs to the Refilin family. As to quaternary structure, interacts with FLNA and FLNB. In terms of tissue distribution, detected in various tissues, with highest expression in lung, followed by spleen.

The protein localises to the cytoplasm. Its subcellular location is the cytoskeleton. Involved in the regulation of the perinuclear actin network and nuclear shape through interaction with filamins. Plays an essential role in the formation of cartilaginous skeletal elements. The chain is Refilin-A (Rflna) from Mus musculus (Mouse).